We begin with the raw amino-acid sequence, 313 residues long: Protein KRE1 (313 aa).

The signal sequence occupies residues 1–26; sequence MMRRTLLHSFATLLLSLSLWSAAVMA. The stretch at 72–86 is repeat 1; it reads TTTNDVGTTVTLTQT. The segment at 72-141 is 2 X approximate repeats; sequence TTTNDVGTTV…LGTTVTLTQT (70 aa). The interval 94 to 114 is disordered; the sequence is PTTTTSTSSTGKTTTTVPTAT. Copy 2 of the repeat occupies 127 to 141; the sequence is TTTNDLGTTVTLTQT. The span at 147–181 shows a compositional bias: low complexity; it reads TSATSSASSSVSSSVSSSGSSSSVKTTTSTGSAVA. A disordered region spans residues 147 to 198; that stretch reads TSATSSASSSVSSSVSSSGSSSSVKTTTSTGSAVAETGTRPDPSTDFTEPPV. The GPI-anchor amidated asparagine moiety is linked to residue asparagine 288. Positions 289-313 are cleaved as a propeptide — removed in mature form; that stretch reads EAQHLGMSSFTSILGGLLTVLIWFL.

It belongs to the KRE1 family. Extensively modified; probably through addition of O-linked mannose residues. In terms of processing, the GPI-anchor is attached to the protein in the endoplasmic reticulum and serves to target the protein to the cell surface. There, the glucosamine-inositol phospholipid moiety is cleaved off and the GPI-modified mannoprotein is covalently attached via its lipidless GPI glycan remnant to the 1,6-beta-glucan of the outer cell wall layer.

It is found in the cell membrane. The protein localises to the secreted. It localises to the cell wall. Functionally, involved in a late stage of cell wall 1,6-beta-glucan synthesis and assembly. Has a structural, rather than enzymic, function within cell wall 1,6-beta-glucan assembly and architecture, possibly by being involved in covalently cross-linking 1,6-beta-glucans to other cell wall components such as 1,3-beta-glucan, chitin and certain mannoproteins. Acts as the plasma membrane receptor for the yeast K1 viral toxin. This chain is Protein KRE1 (KRE1), found in Saccharomyces cerevisiae (strain ATCC 204508 / S288c) (Baker's yeast).